Consider the following 213-residue polypeptide: Glycerol-3-phosphate acyltransferase (213 aa).

5 helical membrane passes run 3-23, 51-71, 78-98, 115-135, and 140-160; these read ILLA…VVVS, KAAI…VWLA, DVAI…PVFF, AVHP…AFFF, and LAAL…FGMP.

This sequence belongs to the PlsY family. In terms of assembly, probably interacts with PlsX.

The protein localises to the cell inner membrane. It catalyses the reaction an acyl phosphate + sn-glycerol 3-phosphate = a 1-acyl-sn-glycero-3-phosphate + phosphate. Its pathway is lipid metabolism; phospholipid metabolism. Functionally, catalyzes the transfer of an acyl group from acyl-phosphate (acyl-PO(4)) to glycerol-3-phosphate (G3P) to form lysophosphatidic acid (LPA). This enzyme utilizes acyl-phosphate as fatty acyl donor, but not acyl-CoA or acyl-ACP. This Burkholderia cenocepacia (strain HI2424) protein is Glycerol-3-phosphate acyltransferase.